Here is a 487-residue protein sequence, read N- to C-terminus: Protein translocase subunit SecY (487 aa).

The Cytoplasmic segment spans residues 1 to 20 (MSWKDTAEPLLVRMPAVQRP). The chain crosses the membrane as a helical span at residues 21 to 47 (EGHVPFKRKLTWTGGVLLLYFFLTNVK). The Extracellular portion of the chain corresponds to 48-59 (LFGLDIDASQQV). An intramembrane region (helical) is located at residues 60 to 67 (FGRFSSIL). A discontinuously helical membrane pass occupies residues 60–88 (FGRFSSILASGQGSIMQLGIGPIVTASIV). The stretch at 68-79 (ASGQGSIMQLGI) is an intramembrane region. Positions 80–88 (GPIVTASIV) form an intramembrane region, helical. Over 89 to 110 (LQLLGGADLLGLNTQDDPRDQI) the chain is Cytoplasmic. The helical transmembrane segment at 111–135 (LYQGLQKLLVLVMICLTGLPMVFAG) threads the bilayer. Residues 136-153 (GFLPADTAVANSLGIGTA) lie on the Extracellular side of the membrane. A helical membrane pass occupies residues 154–178 (GVQWLIFAQMFVGGVLILFMDEVIS). Topologically, residues 179 to 184 (KWGVGS) are cytoplasmic. Residues 185–203 (GIGLFIVAGVSQRLVGGLL) traverse the membrane as a helical segment. Residues 204–244 (TAPFLGNSEGIIYTWYLFITGERGTGPVLAADGLQTVLLQG) lie on the Extracellular side of the membrane. A helical membrane pass occupies residues 245–266 (ELLGLFTTVLIFAVVVYAESVR). Residues 267 to 291 (VEIPLSNARVKGARGRFPVKLIYAS) are Cytoplasmic-facing. Residues 292–313 (VLPMILVRALQANIQFLGRILN) traverse the membrane as a helical segment. The Extracellular portion of the chain corresponds to 314 to 364 (AQLGSMPAFLGTYANGQPTGGLFYFLAPIQSRGDWMWWLEGTAQPVWQILT). The helical transmembrane segment at 365–384 (RVGIDLFVMLVGGAVFAVFW) threads the bilayer. At 385-427 (VETTDMGPEATAKQIHNSGMQIPGFRQNVGVIEKVLERYIPQV) the chain is on the cytoplasmic side. A helical transmembrane segment spans residues 428 to 446 (TVIGGALVGLLAVMANMLG). Over 447–451 (TIGGV) the chain is Extracellular. The chain crosses the membrane as a helical span at residues 452 to 466 (SGTGLLLTVSITYKL). Residues 467–487 (YEEIAEEQLMEMHPMMRQMFG) lie on the Cytoplasmic side of the membrane.

The protein belongs to the SecY/SEC61-alpha family. As to quaternary structure, component of the Sec protein translocase complex. Heterotrimer consisting of alpha (SecY), beta (SecG) and gamma (SecE) subunits. The heterotrimers can form oligomers, although 1 heterotrimer is thought to be able to translocate proteins. Interacts with the ribosome. May interact with SecDF, and other proteins may be involved.

It localises to the cell membrane. In terms of biological role, the central subunit of the protein translocation channel SecYEG. Consists of two halves formed by TMs 1-5 and 6-10. These two domains form a lateral gate at the front which open onto the bilayer between TMs 2 and 7, and are clamped together by SecE at the back. The channel is closed by both a pore ring composed of hydrophobic SecY resides and a short helix (helix 2A) on the extracellular side of the membrane which forms a plug. The plug probably moves laterally to allow the channel to open. The ring and the pore may move independently. The chain is Protein translocase subunit SecY from Haloarcula marismortui (strain ATCC 43049 / DSM 3752 / JCM 8966 / VKM B-1809) (Halobacterium marismortui).